Reading from the N-terminus, the 283-residue chain is NAD(P)H-hydrate epimerase (283 aa).

The transit peptide at 1–28 (MLGVRALFGIGLLVTSRGGFVLTHTRAC) directs the protein to the mitochondrion. The 210-residue stretch at 61–270 (AQQIDEELFS…VLEQKYQLNL (210 aa)) folds into the YjeF N-terminal domain. 115 to 119 (NNGGD) is a (6S)-NADPHX binding site. N116 and D180 together coordinate K(+). Residues 184–190 (GFSFKGA) and D213 contribute to the (6S)-NADPHX site. S216 contributes to the K(+) binding site.

This sequence belongs to the NnrE/AIBP family. Homodimer. Interacts with apoa1a. Binds to high-density lipoprotein. K(+) serves as cofactor.

It is found in the mitochondrion. It localises to the secreted. It carries out the reaction (6R)-NADHX = (6S)-NADHX. It catalyses the reaction (6R)-NADPHX = (6S)-NADPHX. Its function is as follows. Catalyzes the epimerization of the S- and R-forms of NAD(P)HX, a damaged form of NAD(P)H that is a result of enzymatic or heat-dependent hydration. This is a prerequisite for the S-specific NAD(P)H-hydrate dehydratase to allow the repair of both epimers of NAD(P)HX. The protein is NAD(P)H-hydrate epimerase of Danio rerio (Zebrafish).